Reading from the N-terminus, the 269-residue chain is Formamidopyrimidine-DNA glycosylase (269 aa).

Residue Pro-2 is the Schiff-base intermediate with DNA of the active site. Glu-3 acts as the Proton donor in catalysis. Lys-57 serves as the catalytic Proton donor; for beta-elimination activity. Residues His-90, Arg-109, and Lys-150 each coordinate DNA. Residues 235-269 (QVYGRKGEPCRVCGTPIVASKHAQRATFYCRQCQK) form an FPG-type zinc finger. Arg-259 functions as the Proton donor; for delta-elimination activity in the catalytic mechanism.

It belongs to the FPG family. Monomer. Zn(2+) serves as cofactor.

It catalyses the reaction Hydrolysis of DNA containing ring-opened 7-methylguanine residues, releasing 2,6-diamino-4-hydroxy-5-(N-methyl)formamidopyrimidine.. The catalysed reaction is 2'-deoxyribonucleotide-(2'-deoxyribose 5'-phosphate)-2'-deoxyribonucleotide-DNA = a 3'-end 2'-deoxyribonucleotide-(2,3-dehydro-2,3-deoxyribose 5'-phosphate)-DNA + a 5'-end 5'-phospho-2'-deoxyribonucleoside-DNA + H(+). Involved in base excision repair of DNA damaged by oxidation or by mutagenic agents. Acts as a DNA glycosylase that recognizes and removes damaged bases. Has a preference for oxidized purines, such as 7,8-dihydro-8-oxoguanine (8-oxoG). Has AP (apurinic/apyrimidinic) lyase activity and introduces nicks in the DNA strand. Cleaves the DNA backbone by beta-delta elimination to generate a single-strand break at the site of the removed base with both 3'- and 5'-phosphates. The sequence is that of Formamidopyrimidine-DNA glycosylase from Enterobacter sp. (strain 638).